We begin with the raw amino-acid sequence, 227 residues long: Protein FAM3C (227 aa).

Positions 1–24 (MRVAGAAKLVVAVAVFLLTFYVIS) are cleaved as a signal peptide. 2 disulfide bridges follow: C58–C86 and C64–C221. The GG-type lectin domain occupies 67–225 (KHFAFKMASG…VEMEGCIPQK (159 aa)).

It belongs to the FAM3 family. In terms of tissue distribution, present in most secretory epithelia (at protein level).

It localises to the secreted. It is found in the cytoplasmic vesicle. Functionally, may be involved in retinal laminar formation. Promotes epithelial to mesenchymal transition. The chain is Protein FAM3C (FAM3C) from Homo sapiens (Human).